A 391-amino-acid polypeptide reads, in one-letter code: Na(+)/H(+) antiporter NhaA 2 (391 aa).

11 helical membrane passes run alanine 25–leucine 45, valine 56–leucine 76, alanine 98–isoleucine 118, glycine 128–glycine 148, valine 157–phenylalanine 177, serine 180–leucine 200, leucine 208–histidine 228, valine 264–isoleucine 284, valine 297–isoleucine 317, glycine 335–phenylalanine 355, and glutamate 364–leucine 384.

It belongs to the NhaA Na(+)/H(+) (TC 2.A.33) antiporter family.

It localises to the cell inner membrane. The catalysed reaction is Na(+)(in) + 2 H(+)(out) = Na(+)(out) + 2 H(+)(in). Functionally, na(+)/H(+) antiporter that extrudes sodium in exchange for external protons. This chain is Na(+)/H(+) antiporter NhaA 2, found in Pseudomonas syringae pv. tomato (strain ATCC BAA-871 / DC3000).